Reading from the N-terminus, the 103-residue chain is Pyrimidine/purine nucleoside phosphorylase (103 aa).

The protein belongs to the nucleoside phosphorylase PpnP family.

The enzyme catalyses a purine D-ribonucleoside + phosphate = a purine nucleobase + alpha-D-ribose 1-phosphate. It catalyses the reaction adenosine + phosphate = alpha-D-ribose 1-phosphate + adenine. The catalysed reaction is cytidine + phosphate = cytosine + alpha-D-ribose 1-phosphate. It carries out the reaction guanosine + phosphate = alpha-D-ribose 1-phosphate + guanine. The enzyme catalyses inosine + phosphate = alpha-D-ribose 1-phosphate + hypoxanthine. It catalyses the reaction thymidine + phosphate = 2-deoxy-alpha-D-ribose 1-phosphate + thymine. The catalysed reaction is uridine + phosphate = alpha-D-ribose 1-phosphate + uracil. It carries out the reaction xanthosine + phosphate = alpha-D-ribose 1-phosphate + xanthine. Functionally, catalyzes the phosphorolysis of diverse nucleosides, yielding D-ribose 1-phosphate and the respective free bases. Can use uridine, adenosine, guanosine, cytidine, thymidine, inosine and xanthosine as substrates. Also catalyzes the reverse reactions. This is Pyrimidine/purine nucleoside phosphorylase from Shewanella baltica (strain OS195).